The sequence spans 418 residues: ML-236A carboxylate methylbutanoyltransferase mlcH (418 aa).

Arginine 78 contributes to the monacolin J binding site. The Acyl-ester intermediate role is filled by serine 81. The monacolin J site is built by arginine 178, tyrosine 193, and tyrosine 262. Residue glycine 370 participates in 2-methylbutanoate binding.

This sequence belongs to the class-A beta-lactamase family.

It catalyses the reaction ML-236A carboxylate + (S)-2-methylbutanoyl-[2-methylbutanoate polyketide synthase] = mevinic carboxylate + holo-[2-methylbutanoate polyketide synthase]. It participates in polyketide biosynthesis. Compactin diketide synthase; part of the gene cluster that mediates the biosynthesis of compactin, also known as mevastatin or ML-236B, and which acts as a potent competitive inhibitor of HMG-CoA reductase. Compactin biosynthesis is performed in two stages. The first stage is catalyzed by the nonaketide synthase mlcA, which belongs to type I polyketide synthases and catalyzes the iterative nine-step formation of the polyketide. This PKS stage is completed by the action of dehydrogenase mlcG, which catalyzes the NADPH-dependent reduction of the unsaturated tetra-, penta- and heptaketide intermediates that arise during the mlcA-mediated biosynthesis of the nonaketide chain and leads to dihydro-ML-236C carboxylate. Covalently bound dihydro-ML-236C carboxylate is released from mlcA by the mlcF esterase. Conversion of dihydro-ML-236C carboxylate into ML-236A carboxylate is subsequently performed with the participation of molecular oxygen and P450 monoogygenase mlcC. Finally, mlcH performs the conversion of ML-236A carboxylate to ML-236B/compactin carboxylate through the addition of the side-chain diketide moiety produced by the diketide synthase mlcB. The protein is ML-236A carboxylate methylbutanoyltransferase mlcH of Penicillium citrinum.